A 268-amino-acid chain; its full sequence is Type-5 uracil-DNA glycosylase (268 aa).

Positions 1–29 are disordered; the sequence is MHPKTGRAFRSPVEPGSGWPGDPATPQTP. [4Fe-4S] cluster is bound by residues Cys57, Cys60, Cys161, and Cys176.

The protein belongs to the uracil-DNA glycosylase (UDG) superfamily. Type 5 (UDGb) family.

Functionally, DNA glycosylase with broad substrate specificity. This chain is Type-5 uracil-DNA glycosylase, found in Mycobacterium bovis (strain ATCC BAA-935 / AF2122/97).